We begin with the raw amino-acid sequence, 411 residues long: Putative binding protein BRA0748/BS1330_II0741 (411 aa).

The signal sequence occupies residues 1-25 (MLIRKWKAGLLAGLSILALASSADA).

Belongs to the bacterial solute-binding protein 1 family. In terms of assembly, the complex is composed of two ATP-binding proteins (BRA0745), two transmembrane proteins (BRA0749) and a solute-binding protein (BRA0748).

It is found in the periplasm. Functionally, probably part of an ABC transporter complex. The sequence is that of Putative binding protein BRA0748/BS1330_II0741 from Brucella suis biovar 1 (strain 1330).